A 381-amino-acid polypeptide reads, in one-letter code: Nitric oxide reductase FlRd-NAD(+) reductase (381 aa).

Belongs to the FAD-dependent oxidoreductase family. It depends on FAD as a cofactor.

The protein localises to the cytoplasm. It carries out the reaction 2 reduced [nitric oxide reductase rubredoxin domain] + NAD(+) + H(+) = 2 oxidized [nitric oxide reductase rubredoxin domain] + NADH. It functions in the pathway nitrogen metabolism; nitric oxide reduction. Functionally, one of at least two accessory proteins for anaerobic nitric oxide (NO) reductase. Reduces the rubredoxin moiety of NO reductase. In Aliivibrio fischeri (strain ATCC 700601 / ES114) (Vibrio fischeri), this protein is Nitric oxide reductase FlRd-NAD(+) reductase.